We begin with the raw amino-acid sequence, 122 residues long: Large ribosomal subunit protein uL14 (122 aa).

It belongs to the universal ribosomal protein uL14 family. Part of the 50S ribosomal subunit. Forms a cluster with proteins L3 and L19. In the 70S ribosome, L14 and L19 interact and together make contacts with the 16S rRNA in bridges B5 and B8.

Functionally, binds to 23S rRNA. Forms part of two intersubunit bridges in the 70S ribosome. The sequence is that of Large ribosomal subunit protein uL14 from Xanthomonas axonopodis pv. citri (strain 306).